Here is a 211-residue protein sequence, read N- to C-terminus: Uracil phosphoribosyltransferase (211 aa).

Residues R78, R103, and D130–T138 each bind 5-phospho-alpha-D-ribose 1-diphosphate. Residues I195 and G200–A202 contribute to the uracil site. 5-phospho-alpha-D-ribose 1-diphosphate is bound at residue D201.

The protein belongs to the UPRTase family. Requires Mg(2+) as cofactor.

It catalyses the reaction UMP + diphosphate = 5-phospho-alpha-D-ribose 1-diphosphate + uracil. The protein operates within pyrimidine metabolism; UMP biosynthesis via salvage pathway; UMP from uracil: step 1/1. Its activity is regulated as follows. Allosterically activated by GTP. Functionally, catalyzes the conversion of uracil and 5-phospho-alpha-D-ribose 1-diphosphate (PRPP) to UMP and diphosphate. The sequence is that of Uracil phosphoribosyltransferase from Streptomyces griseus subsp. griseus (strain JCM 4626 / CBS 651.72 / NBRC 13350 / KCC S-0626 / ISP 5235).